The sequence spans 108 residues: uncharacterized protein (108 aa).

This is an uncharacterized protein from Rickettsia prowazekii (strain Madrid E).